The sequence spans 33 residues: Beta-theraphotoxin-Cm1b (33 aa).

3 disulfide bridges follow: Cys2/Cys17, Cys9/Cys22, and Cys16/Cys29. The residue at position 33 (Leu33) is a Leucine amide.

This sequence belongs to the neurotoxin 10 (Hwtx-1) family. 04 (CcoTx1) subfamily. Expressed by the venom gland.

Its subcellular location is the secreted. Functionally, inhibits several voltage-gated sodium channels and only one voltage-gated calcium channel (Cav2.2/CACNA1B (IC(50)=1.1 uM) and Nav1.2/SCN2A (IC(50)=3.7-80 nM), Nav1.3/SCN3A (IC(50)=88-5570 nM), Nav1.1/SCN1A (IC(50)=170-407 nM), Nav1.7/SCN9A (IC(50)=95.5-230 nM), Nav1.6/SCN6A (IC(50)=49.9-3990 nM), Nav1.4/SCN4A (IC(50)=113-400 nM or &gt;10 uM), Nav1.5/SCN5A (IC(50)=1524-1634 nM or &gt;10 uM)). The toxin acts by shifting the voltage dependence of channel activation to more depolarized potentials and by blocking the inward component of the sodium current. It shows moderate affinity for lipid bilayers without cholesterol and high affinity for lipid bilayers containing cholesterol. In vivo, this toxin causes general ataxia, lack of response to stimuli, and semiparalysis. After a few minutes, the mice are unable to stand, and breathing is reduced in rhythm and intensity. Symptoms gradually increase with progressive slowing of breathing and flaccid paralysis; death occurred within 10 to 20 minutes post injection. Animals remain totally flaccid, and no symptoms of excitatory neurotoxicity are observed. The sequence is that of Beta-theraphotoxin-Cm1b from Ceratogyrus marshalli (Straighthorned baboon tarantula).